The primary structure comprises 95 residues: Late cornified envelope protein 3B (95 aa).

Positions 1–13 (MSCQQNQQQCQPL) are enriched in low complexity. Disordered regions lie at residues 1–29 (MSCQ…SAQC) and 68–95 (RQSS…GGCC).

The protein belongs to the LCE family. In terms of tissue distribution, skin-specific. Expression was readily detected in adult trunk skin, adult arm skin, fetal skin, penal skin, vulva, esophagus and tongue. Not expressed in the cervix, rectum, lung, colon, or placenta.

Its function is as follows. A structural component of the cornified envelope of the stratum corneum involved in innate cutaneous host defense. Possesses defensin-like antimicrobial activity against a broad spectrum of Gram-positive and Gram-negative bacteria, both aerobic and anaerobic species. Upon inflammation, may regulate skin barrier repair by shaping cutaneous microbiota composition and immune response to bacterial antigens. This chain is Late cornified envelope protein 3B, found in Homo sapiens (Human).